The chain runs to 177 residues: Putative 3-methyladenine DNA glycosylase (177 aa).

The protein belongs to the DNA glycosylase MPG family.

The sequence is that of Putative 3-methyladenine DNA glycosylase from Rickettsia felis (strain ATCC VR-1525 / URRWXCal2) (Rickettsia azadi).